The chain runs to 251 residues: Probable transcriptional regulatory protein Amuc_0709 (251 aa).

This sequence belongs to the TACO1 family.

The protein resides in the cytoplasm. This is Probable transcriptional regulatory protein Amuc_0709 from Akkermansia muciniphila (strain ATCC BAA-835 / DSM 22959 / JCM 33894 / BCRC 81048 / CCUG 64013 / CIP 107961 / Muc).